Reading from the N-terminus, the 209-residue chain is 3-dehydroquinate dehydratase (209 aa).

3-dehydroquinate-binding positions include Ser-6, Glu-25 to Arg-27, and Arg-55. His-109 (proton donor/acceptor) is an active-site residue. Residue Lys-134 is the Schiff-base intermediate with substrate of the active site. Positions 172 and 195 each coordinate 3-dehydroquinate.

The protein belongs to the type-I 3-dehydroquinase family. Homodimer.

It catalyses the reaction 3-dehydroquinate = 3-dehydroshikimate + H2O. It functions in the pathway metabolic intermediate biosynthesis; chorismate biosynthesis; chorismate from D-erythrose 4-phosphate and phosphoenolpyruvate: step 3/7. In terms of biological role, involved in the third step of the chorismate pathway, which leads to the biosynthesis of aromatic amino acids. Catalyzes the cis-dehydration of 3-dehydroquinate (DHQ) and introduces the first double bond of the aromatic ring to yield 3-dehydroshikimate. The sequence is that of 3-dehydroquinate dehydratase from Methanoregula boonei (strain DSM 21154 / JCM 14090 / 6A8).